The primary structure comprises 2070 residues: Multiple PDZ domain protein (2070 aa).

Residues Met1 to Asn63 form the L27 domain. Positions Val137–Ser224 constitute a PDZ 1 domain. At Ser230 the chain carries Phosphoserine. PDZ domains follow at residues Thr257–Ala337 and Asp377–Gly463. Position 483 is a phosphoserine (Ser483). PDZ domains follow at residues Val553–Thr634 and His700–Pro786. Phosphoserine occurs at positions 790 and 1078. The 82-residue stretch at Thr1008–Val1089 folds into the PDZ 6 domain. Residues Asp1121–Asn1140 form a disordered region. In terms of domain architecture, PDZ 7 spans Arg1151–Ile1243. Residue Arg1170 is modified to Omega-N-methylarginine. The interval Ala1278–Val1324 is disordered. Polar residues predominate over residues Asp1311–Ser1321. PDZ domains lie at Met1350–Lys1433 and His1483–Asn1564. The tract at residues Ser1567–Ile1612 is disordered. Residues Ser1584–Pro1610 are compositionally biased toward polar residues. 2 consecutive PDZ domains span residues Thr1629 to Glu1712 and Thr1725 to Lys1807. Phosphoserine is present on residues Ser1818 and Ser1824. PDZ domains lie at Thr1862–Gly1948 and Ser1987–Ser2070.

As to quaternary structure, interacts with CLDN5, DLG4, GRIN1, F11R/JAM, CLDN1, NG2, CRB1, MPP4 and PALS1. Interacts with HTR2A, HTR2B, HTR2C, PLEKHA1/TAPP1, PLEKHA2/TAPP2, CXADR, SYNGAP1, CAMK2A and CAMK2B. Interacts with FAT4 (via cytoplasmic domain). Interacts with DLL1. (Microbial infection) Interacts with human adenovirus type 9 E4-ORF1 protein. In terms of assembly, (Microbial infection) Interacts with human papillomavirus 18/HPV18 protein E6. Expressed in heart, brain, placenta, liver, skeletal muscle, kidney and pancreas.

It localises to the cell membrane. The protein localises to the apical cell membrane. The protein resides in the postsynaptic density. Its subcellular location is the cell projection. It is found in the dendrite. It localises to the cell junction. The protein localises to the tight junction. The protein resides in the synapse. Its subcellular location is the synaptosome. Member of the NMDAR signaling complex that may play a role in control of AMPAR potentiation and synaptic plasticity in excitatory synapses. Promotes clustering of HT2RC at the cell surface. This Homo sapiens (Human) protein is Multiple PDZ domain protein (MPDZ).